The following is a 298-amino-acid chain: N-acetylmuramic acid 6-phosphate etherase (298 aa).

The 164-residue stretch at 55 to 218 (IHAQVSGGGR…STGLMIKSGK (164 aa)) folds into the SIS domain. Glu-83 acts as the Proton donor in catalysis. Residue Glu-114 is part of the active site.

It belongs to the GCKR-like family. MurNAc-6-P etherase subfamily. Homodimer.

The catalysed reaction is N-acetyl-D-muramate 6-phosphate + H2O = N-acetyl-D-glucosamine 6-phosphate + (R)-lactate. The protein operates within amino-sugar metabolism; 1,6-anhydro-N-acetylmuramate degradation. It participates in amino-sugar metabolism; N-acetylmuramate degradation. Its pathway is cell wall biogenesis; peptidoglycan recycling. Its function is as follows. Specifically catalyzes the cleavage of the D-lactyl ether substituent of MurNAc 6-phosphate, producing GlcNAc 6-phosphate and D-lactate. Together with AnmK, is also required for the utilization of anhydro-N-acetylmuramic acid (anhMurNAc) either imported from the medium or derived from its own cell wall murein, and thus plays a role in cell wall recycling. The protein is N-acetylmuramic acid 6-phosphate etherase of Shigella flexneri.